Consider the following 130-residue polypeptide: Lysozyme C (130 aa).

Residues 2 to 130 form the C-type lysozyme domain; the sequence is KVYGRCELAA…VNVWIRGCRL (129 aa). Disulfide bonds link Cys-7–Cys-128, Cys-31–Cys-116, Cys-65–Cys-81, and Cys-77–Cys-95. Catalysis depends on residues Glu-36 and Asp-53.

The protein belongs to the glycosyl hydrolase 22 family. Monomer.

It localises to the secreted. It carries out the reaction Hydrolysis of (1-&gt;4)-beta-linkages between N-acetylmuramic acid and N-acetyl-D-glucosamine residues in a peptidoglycan and between N-acetyl-D-glucosamine residues in chitodextrins.. Functionally, lysozymes have primarily a bacteriolytic function; those in tissues and body fluids are associated with the monocyte-macrophage system and enhance the activity of immunoagents. In Phasianus versicolor (Green pheasant), this protein is Lysozyme C (LYZ).